The primary structure comprises 445 residues: Mannan endo-1,4-beta-mannosidase 2 (445 aa).

Residues 1–27 (MAVGNGLILYHILGLASCIALVYFSLG) form the signal peptide. Residue Trp-110 participates in substrate binding. The N-linked (GlcNAc...) asparagine glycan is linked to Asn-181. Asn-226 provides a ligand contact to substrate. Glu-227 serves as the catalytic Proton donor. Tyr-309 serves as a coordination point for substrate. Glu-349 serves as the catalytic Nucleophile. Trp-391 contributes to the substrate binding site.

The protein belongs to the glycosyl hydrolase 5 (cellulase A) family. Expressed in stems and seeds, and at lower levels in roots and leaves.

The protein localises to the secreted. The catalysed reaction is Random hydrolysis of (1-&gt;4)-beta-D-mannosidic linkages in mannans, galactomannans and glucomannans.. The sequence is that of Mannan endo-1,4-beta-mannosidase 2 (MAN2) from Oryza sativa subsp. japonica (Rice).